Here is a 170-residue protein sequence, read N- to C-terminus: Adenine phosphoribosyltransferase (170 aa).

This sequence belongs to the purine/pyrimidine phosphoribosyltransferase family. In terms of assembly, homodimer.

It is found in the cytoplasm. The catalysed reaction is AMP + diphosphate = 5-phospho-alpha-D-ribose 1-diphosphate + adenine. It participates in purine metabolism; AMP biosynthesis via salvage pathway; AMP from adenine: step 1/1. Its function is as follows. Catalyzes a salvage reaction resulting in the formation of AMP, that is energically less costly than de novo synthesis. The chain is Adenine phosphoribosyltransferase from Clostridioides difficile (strain 630) (Peptoclostridium difficile).